A 416-amino-acid polypeptide reads, in one-letter code: Glutamyl-tRNA reductase (416 aa).

Substrate-binding positions include 49-52, Ser105, 110-112, and Gln116; these read TCNR and EPQ. Cys50 functions as the Nucleophile in the catalytic mechanism. Position 185-190 (185-190) interacts with NADP(+); the sequence is GAGETI.

Belongs to the glutamyl-tRNA reductase family. In terms of assembly, homodimer.

It carries out the reaction (S)-4-amino-5-oxopentanoate + tRNA(Glu) + NADP(+) = L-glutamyl-tRNA(Glu) + NADPH + H(+). It participates in porphyrin-containing compound metabolism; protoporphyrin-IX biosynthesis; 5-aminolevulinate from L-glutamyl-tRNA(Glu): step 1/2. In terms of biological role, catalyzes the NADPH-dependent reduction of glutamyl-tRNA(Glu) to glutamate 1-semialdehyde (GSA). The sequence is that of Glutamyl-tRNA reductase from Shewanella amazonensis (strain ATCC BAA-1098 / SB2B).